We begin with the raw amino-acid sequence, 460 residues long: MAVTMEEIVAHAKHRGFVFPGSEIYGGLANTWDYGPLGVELKNNIKRAWWKKFVQESPYNVGLDAAILMNPRTWEASGHLGNFNDPMVDCKQCKARHRADKLIEKALEEKGIEMIVDGLPLAKMDELIKEYDIACPECGSRDFTNVRQFNLMFKTYQGVTESSANEIYLRPETAQGIFVNFKNVQRTMRKKLPFGIAQIGKSFRNEITPGNFTFRTREFEQMELEFFCKPGEELQWFDYWKQFCKDWLLSLGMKEDNIRLRDHAKEELSHYSNATTDIEYHFPFGWGELWGIASRTDYDLKRHMEYSGEDFHYLDQETNERYIPYCIEPSLGADRVTLAFMIDAYDEEELEDGTTRTVMHLHPALAPYKAAVLPLSKKLADGAHRIYEELVKHFMVDYDETGSIGKRYRRQDEIGTPFCITYDFESEQDGQVTVRDRDTMEQVRLPIGELKAFLEEKIAF.

Arg98 and Glu172 together coordinate substrate. Residues 204-206 (RNE), 214-219 (FRTREF), 288-289 (EL), and 332-335 (GADR) each bind ATP. Residue 219 to 223 (FEQME) participates in substrate binding. 328 to 332 (EPSLG) serves as a coordination point for substrate.

It belongs to the class-II aminoacyl-tRNA synthetase family. As to quaternary structure, homodimer.

The protein resides in the cytoplasm. It catalyses the reaction tRNA(Gly) + glycine + ATP = glycyl-tRNA(Gly) + AMP + diphosphate. Catalyzes the attachment of glycine to tRNA(Gly). This chain is Glycine--tRNA ligase, found in Geobacillus kaustophilus (strain HTA426).